The primary structure comprises 103 residues: Putative membrane protein insertion efficiency factor (103 aa).

Belongs to the UPF0161 family.

It is found in the cell inner membrane. Could be involved in insertion of integral membrane proteins into the membrane. The sequence is that of Putative membrane protein insertion efficiency factor from Chlamydia caviae (strain ATCC VR-813 / DSM 19441 / 03DC25 / GPIC) (Chlamydophila caviae).